A 339-amino-acid chain; its full sequence is N-acetyl-gamma-glutamyl-phosphate reductase (339 aa).

The active site involves cysteine 145.

It belongs to the NAGSA dehydrogenase family. Type 1 subfamily.

Its subcellular location is the cytoplasm. It carries out the reaction N-acetyl-L-glutamate 5-semialdehyde + phosphate + NADP(+) = N-acetyl-L-glutamyl 5-phosphate + NADPH + H(+). The protein operates within amino-acid biosynthesis; L-arginine biosynthesis; N(2)-acetyl-L-ornithine from L-glutamate: step 3/4. In terms of biological role, catalyzes the NADPH-dependent reduction of N-acetyl-5-glutamyl phosphate to yield N-acetyl-L-glutamate 5-semialdehyde. In Thermotoga sp. (strain RQ2), this protein is N-acetyl-gamma-glutamyl-phosphate reductase.